Reading from the N-terminus, the 1097-residue chain is Apolipoprotein B receptor (1097 aa).

Disordered regions lie at residues 64–249, 262–376, 410–739, 789–866, and 889–1097; these read QEDL…KGEE, AWGT…WTTS, EEEG…SRRG, GWDS…ARAE, and VGWQ…PKPQ. Composition is skewed to basic and acidic residues over residues 83 to 92, 158 to 177, and 185 to 208; these read GPGDDRRHEV, ERQE…RSWE, and VRAR…ETEG. The span at 209-218 shows a compositional bias: low complexity; the sequence is KAGAVGPKAA. 2 stretches are compositionally biased toward basic and acidic residues: residues 219-232 and 279-302; these read GDNR…READ and GREE…EEAR. The segment covering 312-330 has biased composition (low complexity); sequence TASGGEEAETASGGEEAGT. The segment covering 331–362 has biased composition (gly residues); that stretch reads ASGGEEAGIASGGEAGTASGGEEAGTASGGEE. Ser-458 is subject to Phosphoserine. Composition is skewed to basic and acidic residues over residues 463 to 487 and 496 to 505; these read VDLR…RMEE and EERGSSRDPV. Ser-510 carries the phosphoserine modification. Thr-572 bears the Phosphothreonine mark. Residue Ser-594 is modified to Phosphoserine. Basic and acidic residues-rich tracts occupy residues 594–606 and 626–637; these read SKEE…EAGP and NRTRKDMERGNT. Residues 640–652 show a composition bias toward acidic residues; that stretch reads DAADGEQREEEET. 3 stretches are compositionally biased toward basic and acidic residues: residues 791–800, 892–918, and 928–950; these read DSKEKEEAAA, QERE…RLLD, and RRAE…EEQP. Basic residues predominate over residues 1000-1017; it reads SRVHLSRSSSQRRSRPSF. Low complexity predominate over residues 1041 to 1050; that stretch reads APEQRPLQLE.

As to quaternary structure, homodimer. Post-translationally, there are 2 forms in macrophages, the membrane-binding proteins 200 kDa (MBP 200) and 235 kDa (MBP 235), that can be reduced into a single active ligand-binding species with intermediate mobility (MBP 200R). As to expression, expressed in peripheral blood leukocytes &gt; bone marrow = spleen &gt; lymph node, and only faintly visible in appendix and thymus. Expressed in the brain, heart, kidney, liver, lung, pancreas, and placenta. Expressed primarily by reticuloendothelial cells: monocytes, macrophages, and endothelial cells. Expressed in atherosclerotic lesion foam cells.

It is found in the cell membrane. Macrophage receptor that binds to the apolipoprotein B48 (APOB) of dietary triglyceride (TG)-rich lipoproteins (TRL) or to a like domain of APOB in hypertriglyceridemic very low density lipoprotein (HTG-VLDL). Binds and internalizes TRL when out of the context of the macrophage. May provide essential lipids to reticuloendothelial cells. Could also be involved in foam cell formation with elevated TRL and remnant lipoprotein (RLP). Mediates the rapid high-affinity uptake of chylomicrons (CM), HTG-VLDL, and trypsinized (tryp) VLDL devoid of APOE in vitro in macrophages. The sequence is that of Apolipoprotein B receptor from Homo sapiens (Human).